The chain runs to 117 residues: Ubiquitin-like protein 3 (117 aa).

Residues 10–88 (INLRLILVSG…PFGKTTVMHL (79 aa)) form the Ubiquitin-like domain. Cys-113 carries S-palmitoyl cysteine lipidation. Cys-114 carries the post-translational modification Cysteine methyl ester. The S-geranylgeranyl cysteine moiety is linked to residue Cys-114. Positions 115–117 (VIL) are cleaved as a propeptide — removed in mature form.

Its subcellular location is the cell membrane. The protein is Ubiquitin-like protein 3 (Ubl3) of Mus musculus (Mouse).